A 635-amino-acid chain; its full sequence is Chaperone protein HtpG (635 aa).

The a; substrate-binding stretch occupies residues 1–343; sequence MTAEATVETR…SNDLSLNVSR (343 aa). A b region spans residues 344 to 560; that stretch reads EILQQDPNID…EHDMGAQMRR (217 aa). Residues 561 to 635 are c; the sequence is LLEAAGQAVP…LNKLLLELSN (75 aa).

This sequence belongs to the heat shock protein 90 family. Homodimer.

The protein localises to the cytoplasm. Functionally, molecular chaperone. Has ATPase activity. This chain is Chaperone protein HtpG, found in Saccharophagus degradans (strain 2-40 / ATCC 43961 / DSM 17024).